A 517-amino-acid polypeptide reads, in one-letter code: Beta-glucosidase 17 (517 aa).

The first 23 residues, 1–23, serve as a signal peptide directing secretion; it reads MAIKSIFIIIIISIITSISELYA. Residues glutamine 54, histidine 158, and 203–204 each bind a beta-D-glucoside; that span reads NE. Glutamate 204 serves as the catalytic Proton donor. The cysteines at positions 223 and 230 are disulfide-linked. An N-linked (GlcNAc...) asparagine glycan is attached at asparagine 229. Tyrosine 346 serves as a coordination point for a beta-D-glucoside. 2 N-linked (GlcNAc...) asparagine glycosylation sites follow: asparagine 361 and asparagine 371. A beta-D-glucoside-binding positions include glutamate 417, tryptophan 466, 473 to 474, and tyrosine 482; that span reads EW. The active-site Nucleophile is glutamate 417. A glycan (N-linked (GlcNAc...) asparagine) is linked at asparagine 510.

This sequence belongs to the glycosyl hydrolase 1 family.

The enzyme catalyses Hydrolysis of terminal, non-reducing beta-D-glucosyl residues with release of beta-D-glucose.. This chain is Beta-glucosidase 17, found in Arabidopsis thaliana (Mouse-ear cress).